The chain runs to 325 residues: Coiled-coil domain-containing protein 160 (325 aa).

Disordered regions lie at residues 18 to 45 (SAQDVLEETSEPESSSEQTTADSSKGME) and 81 to 123 (ENKR…CSTD). A compositionally biased stretch (basic and acidic residues) spans 81–91 (ENKRNISKNET). Residues 92-123 (DTNSASYESSNVDVTTEESFNSTEDNSTCSTD) are compositionally biased toward polar residues. Positions 144–288 (KLCLNLLNEE…SVIKNELRTE (145 aa)) form a coiled coil.

The protein belongs to the CCDC160 family.

This Homo sapiens (Human) protein is Coiled-coil domain-containing protein 160 (CCDC160).